The sequence spans 442 residues: Histidinol dehydrogenase (442 aa).

NAD(+)-binding residues include Y132, Q194, and N217. Residues S243, Q265, and H268 each coordinate substrate. Zn(2+) contacts are provided by Q265 and H268. Residues E332 and H333 each act as proton acceptor in the active site. Residues H333, D366, E420, and H425 each contribute to the substrate site. Residue D366 participates in Zn(2+) binding. Position 425 (H425) interacts with Zn(2+).

The protein belongs to the histidinol dehydrogenase family. The cofactor is Zn(2+).

The catalysed reaction is L-histidinol + 2 NAD(+) + H2O = L-histidine + 2 NADH + 3 H(+). It participates in amino-acid biosynthesis; L-histidine biosynthesis; L-histidine from 5-phospho-alpha-D-ribose 1-diphosphate: step 9/9. Catalyzes the sequential NAD-dependent oxidations of L-histidinol to L-histidinaldehyde and then to L-histidine. The chain is Histidinol dehydrogenase from Idiomarina loihiensis (strain ATCC BAA-735 / DSM 15497 / L2-TR).